A 442-amino-acid polypeptide reads, in one-letter code: C4-dicarboxylate transport protein (442 aa).

Transmembrane regions (helical) follow at residues 10 to 30, 40 to 60, 77 to 97, 149 to 169, 185 to 205, 221 to 241, 288 to 308, and 354 to 374; these read VQVLIAIVLGILVGFLFPSFG, FIKLIKMLIAPIIFATVVSGI, LIYFEVVTTFALVIGLVVANI, LLQVLLISVLFGFALTQLGTL, FVILGFVMRLAPIGAFGAMAF, LMVAFYATCLLFVFVVLGLIA, VVGLVVPAGYSFNLDGTSIYL, and AATLSAVGHVPVAGLALILGI. Residues 420 to 442 are disordered; that stretch reads PATPEVAAEERGEGRGLDGPLPA.

It belongs to the dicarboxylate/amino acid:cation symporter (DAACS) (TC 2.A.23) family.

The protein resides in the cell membrane. Responsible for the transport of dicarboxylates such as succinate, fumarate, and malate across the membrane. This Deinococcus geothermalis (strain DSM 11300 / CIP 105573 / AG-3a) protein is C4-dicarboxylate transport protein.